A 322-amino-acid chain; its full sequence is NADH-quinone oxidoreductase subunit H (322 aa).

9 helical membrane passes run 15–35, 50–69, 81–101, 114–134, 149–169, 186–206, 237–257, 265–285, and 302–322; these read FFKV…LSIV, NRVG…KILF, FIFV…IPII, IGIL…LFAG, ACVQ…GVVA, IWNV…GLAV, FFIG…TLFF, IPGC…FILI, and WKFC…LILV.

It belongs to the complex I subunit 1 family. As to quaternary structure, NDH-1 is composed of 13 different subunits. Subunits NuoA, H, J, K, L, M, N constitute the membrane sector of the complex.

The protein localises to the cell membrane. The catalysed reaction is a quinone + NADH + 5 H(+)(in) = a quinol + NAD(+) + 4 H(+)(out). Its function is as follows. NDH-1 shuttles electrons from NADH, via FMN and iron-sulfur (Fe-S) centers, to quinones in the respiratory chain. The immediate electron acceptor for the enzyme in this species is believed to be ubiquinone. Couples the redox reaction to proton translocation (for every two electrons transferred, four hydrogen ions are translocated across the cytoplasmic membrane), and thus conserves the redox energy in a proton gradient. This subunit may bind ubiquinone. This Buchnera aphidicola subsp. Acyrthosiphon pisum (strain 5A) protein is NADH-quinone oxidoreductase subunit H.